Reading from the N-terminus, the 105-residue chain is MPVVKINAIEVPAGAGPELEKRFAHRAHAVENSPGFLGFQLLRPVKGEERYFVVTHWESDEAFQAWANGPAIAAHAGHRANPVATGASLLEFEVVLDVGGTGKTA.

An ABM domain is found at 3-92 (VVKINAIEVP…VATGASLLEF (90 aa)). Residues 22-26 (RFAHR), His-75, and 83-86 (VATG) contribute to the heme site.

It belongs to the antibiotic biosynthesis monooxygenase family. Homodimer.

The catalysed reaction is heme b + 3 AH2 + 3 O2 + 2 H(+) = mycobilin a + Fe(2+) + 3 A + 3 H2O. It carries out the reaction heme b + 3 AH2 + 3 O2 + 2 H(+) = mycobilin b + Fe(2+) + 3 A + 3 H2O. Its function is as follows. Catalyzes the oxidative degradation of the heme macrocyclic porphyrin ring in the presence of a suitable electron donor such as ascorbate or NADPH--cytochrome P450 reductase, with subsequent release of free iron. This Mycobacterium tuberculosis (strain CDC 1551 / Oshkosh) protein is Heme oxygenase (mycobilin-producing) (mhuD).